A 282-amino-acid chain; its full sequence is 4-hydroxybenzoate octaprenyltransferase (282 aa).

9 helical membrane passes run 17 to 37 (IGIL…NQGF), 40 to 60 (IDLL…GCVI), 90 to 110 (AFIL…KLPI), 113 to 133 (FYFA…KRFL), 135 to 155 (APQL…FIAS), 163 to 183 (FIVL…MYAM), 207 to 227 (LIIA…AINK), 231 to 251 (WFFY…LKLI), and 262 to 282 (AFLV…LALI).

The protein belongs to the UbiA prenyltransferase family. Mg(2+) serves as cofactor.

The protein localises to the cell inner membrane. The catalysed reaction is all-trans-octaprenyl diphosphate + 4-hydroxybenzoate = 4-hydroxy-3-(all-trans-octaprenyl)benzoate + diphosphate. It functions in the pathway cofactor biosynthesis; ubiquinone biosynthesis. Catalyzes the prenylation of para-hydroxybenzoate (PHB) with an all-trans polyprenyl group. Mediates the second step in the final reaction sequence of ubiquinone-8 (UQ-8) biosynthesis, which is the condensation of the polyisoprenoid side chain with PHB, generating the first membrane-bound Q intermediate 3-octaprenyl-4-hydroxybenzoate. The polypeptide is 4-hydroxybenzoate octaprenyltransferase (Legionella pneumophila (strain Corby)).